A 342-amino-acid polypeptide reads, in one-letter code: Peptide chain release factor 1 (342 aa).

Gln211 carries the N5-methylglutamine modification. The disordered stretch occupies residues 262-282 (KEREISQKRKSQIGTGERSEK).

This sequence belongs to the prokaryotic/mitochondrial release factor family. Methylated by PrmC. Methylation increases the termination efficiency of RF1.

Its subcellular location is the cytoplasm. In terms of biological role, peptide chain release factor 1 directs the termination of translation in response to the peptide chain termination codons UAG and UAA. This chain is Peptide chain release factor 1 (prfA), found in Thermotoga maritima (strain ATCC 43589 / DSM 3109 / JCM 10099 / NBRC 100826 / MSB8).